The sequence spans 117 residues: Ig heavy chain V region MOPC 47A (117 aa).

The Ig-like domain maps to 1 to 113 (EVKLVESGGG…FAYWGZGTLV (113 aa)).

This is Ig heavy chain V region MOPC 47A from Mus musculus (Mouse).